Here is a 213-residue protein sequence, read N- to C-terminus: MSKEELLQELAGAVITCKKDAVLAAVEKAKGELDPSEIIEKGLAAGMNEVGVLFERGKLFLPHVMMAADAMTAGVEALKDLMPEGSASSKMGVIVNGTVEGDVHDIGKSIVSTMLQSAGFEVHDIGRDVPIKNFVEKAKEVNADMIGLSALMTTTLPGQRDVIELLKEEGLRENVKVMIGGAPATQAWADKIGADCYAENASEAVAKAKELLA.

Residues 1-90 (MSKEELLQEL…LMPEGSASSK (90 aa)) enclose the B12-binding N-terminal domain. One can recognise a B12-binding domain in the interval 91-213 (MGVIVNGTVE…AVAKAKELLA (123 aa)). Position 104 (histidine 104) interacts with methylcob(III)alamin.

Belongs to the methylamine corrinoid protein family.

It functions in the pathway one-carbon metabolism; methanogenesis from dimethylamine. Functionally, acts as a methyl group carrier between MtbB and MtbA. In Methanosarcina acetivorans (strain ATCC 35395 / DSM 2834 / JCM 12185 / C2A), this protein is Dimethylamine corrinoid protein 1 (mtbC1).